Here is a 321-residue protein sequence, read N- to C-terminus: Ribosomal RNA small subunit methyltransferase H (321 aa).

S-adenosyl-L-methionine-binding positions include 44–46 (GGH), aspartate 64, phenylalanine 88, aspartate 109, and glutamine 116.

The protein belongs to the methyltransferase superfamily. RsmH family.

Its subcellular location is the cytoplasm. It carries out the reaction cytidine(1402) in 16S rRNA + S-adenosyl-L-methionine = N(4)-methylcytidine(1402) in 16S rRNA + S-adenosyl-L-homocysteine + H(+). Its function is as follows. Specifically methylates the N4 position of cytidine in position 1402 (C1402) of 16S rRNA. The sequence is that of Ribosomal RNA small subunit methyltransferase H from Methylobacillus flagellatus (strain ATCC 51484 / DSM 6875 / VKM B-1610 / KT).